A 424-amino-acid chain; its full sequence is UDP-N-acetylglucosamine 1-carboxyvinyltransferase (424 aa).

Residue 22-23 (KN) coordinates phosphoenolpyruvate. A UDP-N-acetyl-alpha-D-glucosamine-binding site is contributed by Arg-93. Cys-117 acts as the Proton donor in catalysis. Cys-117 is subject to 2-(S-cysteinyl)pyruvic acid O-phosphothioketal. UDP-N-acetyl-alpha-D-glucosamine is bound by residues 122–126 (RPIDL), Asp-307, and Val-329.

The protein belongs to the EPSP synthase family. MurA subfamily.

The protein localises to the cytoplasm. The enzyme catalyses phosphoenolpyruvate + UDP-N-acetyl-alpha-D-glucosamine = UDP-N-acetyl-3-O-(1-carboxyvinyl)-alpha-D-glucosamine + phosphate. Its pathway is cell wall biogenesis; peptidoglycan biosynthesis. Functionally, cell wall formation. Adds enolpyruvyl to UDP-N-acetylglucosamine. The polypeptide is UDP-N-acetylglucosamine 1-carboxyvinyltransferase (Pelodictyon phaeoclathratiforme (strain DSM 5477 / BU-1)).